The sequence spans 69 residues: Conotoxin Lt5.7 (69 aa).

The first 19 residues, M1–P19, serve as a signal peptide directing secretion. The propeptide occupies K20 to A54.

This sequence belongs to the conotoxin T superfamily. In terms of processing, contains 2 disulfide bonds that can be either 'C1-C3, C2-C4' or 'C1-C4, C2-C3', since these disulfide connectivities have been observed for conotoxins with cysteine framework V (for examples, see AC P0DQQ7 and AC P81755). As to expression, expressed by the venom duct.

The protein localises to the secreted. The chain is Conotoxin Lt5.7 from Conus litteratus (Lettered cone).